Consider the following 511-residue polypeptide: Aprataxin and PNK-like factor (511 aa).

The 108-residue stretch at 1–108 (MSGGFELQPR…RILSIPSEVE (108 aa)) folds into the FHA-like domain. Serine 116 bears the Phosphoserine; by ATM mark. A Phosphoserine modification is found at serine 149. The short motif at 182–191 (RKRILPTWML) is the KBM element. Residues 223-370 (KSQLNTTQQG…ATDSVLQGSE (148 aa)) form a disordered region. Polar residues-rich tracts occupy residues 225 to 249 (QLNT…SAEQ) and 263 to 293 (STIS…NAQR). Residues 304–315 (VSKHKIATKRTP) show a composition bias toward basic residues. Residues 324–344 (CSENCSSAQGDSLQDESQGSH) are compositionally biased toward polar residues. Residues 345-355 (SESSSNPSNPE) are compositionally biased toward low complexity. A glycoprotein-binding residues include arginine 376, tyrosine 381, tyrosine 386, and arginine 387. A PBZ-type 1 zinc finger spans residues 377 to 398 (TSCMYGANCYRKNPVHFQHFSH). The tract at residues 406-416 (GVQIVGQDETD) is flexible linker. The PBZ-type 2 zinc finger occupies 419–440 (PECPYGPSCYRKNPQHKIEYRH). A glycoprotein contacts are provided by tyrosine 423, tyrosine 428, and arginine 429. The interval 449 to 497 (LDEDNDNVGQPNEYDLNDSFLDDEEEDYEPTDEDSDWEPGKEDEEKEDV) is disordered. Positions 468–497 (FLDDEEEDYEPTDEDSDWEPGKEDEEKEDV) are enriched in acidic residues. Residues 476–500 (YEPTDEDSDWEPGKEDEEKEDVEEL) carry the NAP1L motif motif. Residues 487 to 511 (PGKEDEEKEDVEELLKEAKRFMKRK) are a coiled coil.

Belongs to the APLF family. Interacts with LIG4. Interacts with PARP1. Interacts with XRCC4. Interacts (via KBM motif) with XRCC5 and XRCC6; promoting recruitment to DNA damage sites. Interacts with XRCC1. Interacts (via C-terminal disordered region) with histones; interacts with histone H2A, H2B and H3-H4. Post-translationally, poly-ADP-ribosylated. In addition to binding non covalently poly-ADP-ribose via its PBZ-type zinc fingers, the protein is also covalently poly-ADP-ribosylated by PARP1. Phosphorylated in an ATM-dependent manner upon double-strand DNA break.

The protein resides in the nucleus. It is found in the chromosome. It localises to the cytoplasm. Its subcellular location is the cytosol. Its function is as follows. Histone chaperone involved in single-strand and double-strand DNA break repair. Recruited to sites of DNA damage through interaction with branched poly-ADP-ribose chains, a polymeric post-translational modification synthesized transiently at sites of chromosomal damage to accelerate DNA strand break repair reactions. Following recruitment to DNA damage sites, acts as a histone chaperone that mediates histone eviction during DNA repair and promotes recruitment of histone variant MACROH2A1. Also has a nuclease activity: displays apurinic-apyrimidinic (AP) endonuclease and 3'-5' exonuclease activities in vitro. Also able to introduce nicks at hydroxyuracil and other types of pyrimidine base damage. Together with PARP3, promotes the retention of the LIG4-XRCC4 complex on chromatin and accelerate DNA ligation during non-homologous end-joining (NHEJ). Also acts as a negative regulator of cell pluripotency by promoting histone exchange. Required for the embryo implantation during the epithelial to mesenchymal transition in females. The sequence is that of Aprataxin and PNK-like factor from Homo sapiens (Human).